We begin with the raw amino-acid sequence, 162 residues long: UPF0305 protein MmarC7_1691 (162 aa).

It belongs to the UPF0305 family.

The sequence is that of UPF0305 protein MmarC7_1691 from Methanococcus maripaludis (strain C7 / ATCC BAA-1331).